The sequence spans 702 residues: Polyribonucleotide nucleotidyltransferase 1 (702 aa).

Mg(2+)-binding residues include Asp-483 and Asp-489. The KH domain maps to 550–609 (PQVTKLKVHPDKVREVIGAGGKVINKIIDETGVKINIENDGTIYIAAPDQESARVALEMI). Positions 619-687 (GEVYTGKVIK…PQGKIGLSRK (69 aa)) constitute an S1 motif domain.

The protein belongs to the polyribonucleotide nucleotidyltransferase family. Mg(2+) serves as cofactor.

The protein localises to the cytoplasm. It catalyses the reaction RNA(n+1) + phosphate = RNA(n) + a ribonucleoside 5'-diphosphate. Involved in mRNA degradation. Catalyzes the phosphorolysis of single-stranded polyribonucleotides processively in the 3'- to 5'-direction. In Alkaliphilus metalliredigens (strain QYMF), this protein is Polyribonucleotide nucleotidyltransferase 1.